The chain runs to 387 residues: Chorismate synthase (387 aa).

NADP(+) contacts are provided by arginine 40 and arginine 46. FMN-binding positions include 129 to 131 (RSS), 250 to 251 (QA), glycine 295, 310 to 314 (KPIPT), and arginine 336.

It belongs to the chorismate synthase family. As to quaternary structure, homotetramer. FMNH2 is required as a cofactor.

It catalyses the reaction 5-O-(1-carboxyvinyl)-3-phosphoshikimate = chorismate + phosphate. It functions in the pathway metabolic intermediate biosynthesis; chorismate biosynthesis; chorismate from D-erythrose 4-phosphate and phosphoenolpyruvate: step 7/7. Functionally, catalyzes the anti-1,4-elimination of the C-3 phosphate and the C-6 proR hydrogen from 5-enolpyruvylshikimate-3-phosphate (EPSP) to yield chorismate, which is the branch point compound that serves as the starting substrate for the three terminal pathways of aromatic amino acid biosynthesis. This reaction introduces a second double bond into the aromatic ring system. This is Chorismate synthase from Desulforamulus reducens (strain ATCC BAA-1160 / DSM 100696 / MI-1) (Desulfotomaculum reducens).